The primary structure comprises 122 residues: Large ribosomal subunit protein uL14 (122 aa).

This sequence belongs to the universal ribosomal protein uL14 family. In terms of assembly, part of the 50S ribosomal subunit. Forms a cluster with proteins L3 and L19. In the 70S ribosome, L14 and L19 interact and together make contacts with the 16S rRNA in bridges B5 and B8.

Its function is as follows. Binds to 23S rRNA. Forms part of two intersubunit bridges in the 70S ribosome. In Mycobacterium marinum (strain ATCC BAA-535 / M), this protein is Large ribosomal subunit protein uL14.